Consider the following 330-residue polypeptide: Aspartate--ammonia ligase (330 aa).

Belongs to the class-II aminoacyl-tRNA synthetase family. AsnA subfamily.

It is found in the cytoplasm. It carries out the reaction L-aspartate + NH4(+) + ATP = L-asparagine + AMP + diphosphate + H(+). Its pathway is amino-acid biosynthesis; L-asparagine biosynthesis; L-asparagine from L-aspartate (ammonia route): step 1/1. The chain is Aspartate--ammonia ligase from Salmonella schwarzengrund (strain CVM19633).